Here is a 181-residue protein sequence, read N- to C-terminus: Ribosome-recycling factor (181 aa).

A disordered region spans residues 131-154 (RRDAMDSVKKEKEMPEDDVRKAEN).

Belongs to the RRF family.

The protein resides in the cytoplasm. Functionally, responsible for the release of ribosomes from messenger RNA at the termination of protein biosynthesis. May increase the efficiency of translation by recycling ribosomes from one round of translation to another. The polypeptide is Ribosome-recycling factor (Leuconostoc citreum (strain KM20)).